Consider the following 579-residue polypeptide: Polyadenylate-binding protein, cytoplasmic and nuclear (579 aa).

The span at 1 to 10 (MADITEKTAE) shows a compositional bias: basic and acidic residues. Residues 1–32 (MADITEKTAEQLENLSLQDKQEGTNEENQSET) form a disordered region. 4 RRM domains span residues 35–113 (ASLY…WSQR), 123–200 (GNIF…PHLS), 216–293 (TNVY…RAQK), and 319–396 (INLF…IAQR). In terms of domain architecture, PABC spans 487 to 566 (GFARNGPAAN…ASAAYESFKQ (80 aa)). A disordered region spans residues 560 to 579 (AYESFKQEQQQPQGEEAQQA). The segment covering 566–579 (QEQQQPQGEEAQQA) has biased composition (low complexity).

It belongs to the polyadenylate-binding protein type-1 family.

The protein localises to the cytoplasm. The protein resides in the nucleus. Binds the poly(A) tail of mRNA. Appears to be an important mediator of the multiple roles of the poly(A) tail in mRNA biogenesis, stability and translation. In the nucleus, involved in both mRNA cleavage and polyadenylation. Is also required for efficient mRNA export to the cytoplasm. Acts in concert with a poly(A)-specific nuclease (PAN) to affect poly(A) tail shortening, which may occur concomitantly with either nucleocytoplasmic mRNA transport or translational initiation. In the cytoplasm, stimulates translation initiation and regulates mRNA decay through translation termination-coupled poly(A) shortening, probably mediated by PAN. This is Polyadenylate-binding protein, cytoplasmic and nuclear (PAB1) from Candida glabrata (strain ATCC 2001 / BCRC 20586 / JCM 3761 / NBRC 0622 / NRRL Y-65 / CBS 138) (Yeast).